The chain runs to 200 residues: Dephospho-CoA kinase (200 aa).

The DPCK domain maps to 3-200; it reads VIGLTGGIGS…KKYMTLAQGS (198 aa). 11–16 provides a ligand contact to ATP; the sequence is GSGKTS.

Belongs to the CoaE family.

It is found in the cytoplasm. It carries out the reaction 3'-dephospho-CoA + ATP = ADP + CoA + H(+). It participates in cofactor biosynthesis; coenzyme A biosynthesis; CoA from (R)-pantothenate: step 5/5. Its function is as follows. Catalyzes the phosphorylation of the 3'-hydroxyl group of dephosphocoenzyme A to form coenzyme A. The sequence is that of Dephospho-CoA kinase from Nitrosospira multiformis (strain ATCC 25196 / NCIMB 11849 / C 71).